The following is a 430-amino-acid chain: Adenylosuccinate synthetase (430 aa).

GTP-binding positions include 12-18 and 40-42; these read GDEGKGK and GHT. Aspartate 13 serves as the catalytic Proton acceptor. 2 residues coordinate Mg(2+): aspartate 13 and glycine 40. Residues 13–16, 38–41, threonine 128, arginine 142, glutamine 223, threonine 238, and arginine 302 each bind IMP; these read DEGK and NAGH. Histidine 41 functions as the Proton donor in the catalytic mechanism. A substrate-binding site is contributed by 298–304; that stretch reads VNTGRKR. GTP is bound by residues arginine 304, 330-332, and 412-414; these read KLD and GVG.

It belongs to the adenylosuccinate synthetase family. Homodimer. Mg(2+) serves as cofactor.

It localises to the cytoplasm. The enzyme catalyses IMP + L-aspartate + GTP = N(6)-(1,2-dicarboxyethyl)-AMP + GDP + phosphate + 2 H(+). Its pathway is purine metabolism; AMP biosynthesis via de novo pathway; AMP from IMP: step 1/2. Its function is as follows. Plays an important role in the de novo pathway of purine nucleotide biosynthesis. Catalyzes the first committed step in the biosynthesis of AMP from IMP. The chain is Adenylosuccinate synthetase from Corynebacterium aurimucosum (strain ATCC 700975 / DSM 44827 / CIP 107346 / CN-1) (Corynebacterium nigricans).